A 150-amino-acid chain; its full sequence is Putative pre-16S rRNA nuclease (150 aa).

This sequence belongs to the YqgF nuclease family.

It localises to the cytoplasm. Its function is as follows. Could be a nuclease involved in processing of the 5'-end of pre-16S rRNA. The protein is Putative pre-16S rRNA nuclease of Chlamydia abortus (strain DSM 27085 / S26/3) (Chlamydophila abortus).